The sequence spans 339 residues: 2-keto-3-deoxygluconate permease (339 aa).

The next 10 helical transmembrane spans lie at 10-30, 42-62, 77-97, 100-120, 141-161, 163-183, 199-219, 224-244, 254-274, and 289-309; these read IPGGMMLVPLFLGALCHTFAP, GLISGTVPILAVWFFCMGASI, LVVTKIAVAWVVAAVASRILP, GVEVGFFAGLSTLALVAAMDM, AFVLMSLESGPLMTMVILGTA, IASFEPHVFVGAVLPFLVGFA, VQTLIPFFAFALGNTIDLSVI, LLGVLLGISVIIITGIPLIVA, TAGIAASSSAGAAVATPVLIA, and TLVATSVIVTSVLVPIITAMW. A disordered region spans residues 315-339; it reads GGDGTVPKEDAVEEKAEQQRRRIIK. Residues 320–339 show a composition bias toward basic and acidic residues; sequence VPKEDAVEEKAEQQRRRIIK.

It belongs to the KdgT transporter family.

The protein localises to the cell inner membrane. It carries out the reaction 2-dehydro-3-deoxy-D-gluconate(in) + H(+)(in) = 2-dehydro-3-deoxy-D-gluconate(out) + H(+)(out). Its activity is regulated as follows. Uptake is inhibited by the protonophore uncouplers carbonyl cyanide m-chlorophenylhydrazone (CCCP) and 2,4-dinitrophenol, and by NaN(3). In terms of biological role, catalyzes the proton-dependent uptake of 2-keto-3-deoxygluconate (KDG) into the cell. Can also mediate the uptake of glucuronate with a low affinity, and may mediate the uptake of 5-keto-4-deoxyuronate (DKI) and 2,5-diketo-3-deoxygluconate (DKII), which are intermediates in pectin degradation. The chain is 2-keto-3-deoxygluconate permease from Dickeya chrysanthemi (Pectobacterium chrysanthemi).